We begin with the raw amino-acid sequence, 339 residues long: Phosphate acyltransferase (339 aa).

Belongs to the PlsX family. As to quaternary structure, homodimer. Probably interacts with PlsY.

Its subcellular location is the cytoplasm. The catalysed reaction is a fatty acyl-[ACP] + phosphate = an acyl phosphate + holo-[ACP]. Its pathway is lipid metabolism; phospholipid metabolism. In terms of biological role, catalyzes the reversible formation of acyl-phosphate (acyl-PO(4)) from acyl-[acyl-carrier-protein] (acyl-ACP). This enzyme utilizes acyl-ACP as fatty acyl donor, but not acyl-CoA. In Tolumonas auensis (strain DSM 9187 / NBRC 110442 / TA 4), this protein is Phosphate acyltransferase.